Reading from the N-terminus, the 356-residue chain is sn-glycerol-3-phosphate import ATP-binding protein UgpC (356 aa).

The 232-residue stretch at 4-235 (LKLQAVTKSW…PASRFVASFI (232 aa)) folds into the ABC transporter domain. 37-44 (GPSGCGKS) is an ATP binding site.

Belongs to the ABC transporter superfamily. sn-glycerol-3-phosphate importer (TC 3.A.1.1.3) family. In terms of assembly, the complex is composed of two ATP-binding proteins (UgpC), two transmembrane proteins (UgpA and UgpE) and a solute-binding protein (UgpB).

Its subcellular location is the cell inner membrane. It carries out the reaction sn-glycerol 3-phosphate(out) + ATP + H2O = sn-glycerol 3-phosphate(in) + ADP + phosphate + H(+). Part of the ABC transporter complex UgpBAEC involved in sn-glycerol-3-phosphate (G3P) import. Responsible for energy coupling to the transport system. This is sn-glycerol-3-phosphate import ATP-binding protein UgpC from Salmonella choleraesuis (strain SC-B67).